The following is a 202-amino-acid chain: MSYLGVGVSPGNVPVYHGSNLKVIDKRVRLAELVLRCLICGLGVLAAVLVGTDTQVKEIFSIQKKARFTDMKALVFLVIANGIAAAYSLLQGVRCVVGMVRGSALFSKPLAWAIFSGDQMMAYLTVAAVAAAAQSAVFAKLGQPELQWMKICNMYGKFCNQVGEGIASALLVSVSMVVLSCISAFSLFRLYGANKGKDCTRW.

At 1-29 (MSYLGVGVSPGNVPVYHGSNLKVIDKRVR) the chain is on the cytoplasmic side. Residues 30–50 (LAELVLRCLICGLGVLAAVLV) traverse the membrane as a helical segment. Over 51 to 72 (GTDTQVKEIFSIQKKARFTDMK) the chain is Extracellular. A helical membrane pass occupies residues 73 to 93 (ALVFLVIANGIAAAYSLLQGV). Topologically, residues 94–109 (RCVVGMVRGSALFSKP) are cytoplasmic. The chain crosses the membrane as a helical span at residues 110–130 (LAWAIFSGDQMMAYLTVAAVA). Residues 131 to 164 (AAAQSAVFAKLGQPELQWMKICNMYGKFCNQVGE) lie on the Extracellular side of the membrane. A helical membrane pass occupies residues 165 to 185 (GIASALLVSVSMVVLSCISAF). The Cytoplasmic portion of the chain corresponds to 186-202 (SLFRLYGANKGKDCTRW).

Belongs to the Casparian strip membrane proteins (CASP) family. In terms of assembly, homodimer and heterodimers.

The protein localises to the cell membrane. This Ricinus communis (Castor bean) protein is CASP-like protein 2B1.